Reading from the N-terminus, the 5233-residue chain is E3 ubiquitin-protein ligase highwire (5233 aa).

The disordered stretch occupies residues 197–230; it reads VVGGPGLPAEKRPRRDSANSDADSDTEEPTEREP. A compositionally biased stretch (basic and acidic residues) spans 205–214; that stretch reads AEKRPRRDSA. 2 positions are modified to phosphoserine: Ser-213 and Ser-216. RCC1 repeat units follow at residues 615–666, 669–724, and 768–818; these read NGRV…ALLV, DGTV…FVTK, and KGQL…DKRL. A disordered region spans residues 680 to 700; it reads RGEDGDSSKNRRQPKAVKPKK. Residues 689-700 are compositionally biased toward basic residues; it reads NRRQPKAVKPKK. The tract at residues 900-950 is disordered; sequence TELKPPPSDVQQRQQRSKTLIMRRKERKGELETGAAGGGAATPTDLDKDPP. Residues 908–917 are compositionally biased toward polar residues; sequence DVQQRQQRSK. RCC1 repeat units lie at residues 931–983, 984–1033, and 1035–1084; these read ETGA…VLTL, AGEV…LLTS, and GMVY…TVAP. Disordered regions lie at residues 1051 to 1109 and 1287 to 1327; these read LPSD…EMPP and AAAA…PPQL. Over residues 1092–1103 the composition is skewed to polar residues; the sequence is RSQSPANVQPSG. Positions 1287–1302 are enriched in low complexity; sequence AAAAAVAAPGTPVSAG. Residues 1436 to 1587 are PHR domain 1; the sequence is NRFDNFGGGW…GQIPAILYRL (152 aa). The disordered stretch occupies residues 1681–1718; sequence SSTSVATGGGSNAAHGSGVVTTAKSVQSKPNKDKNTPR. A compositionally biased stretch (polar residues) spans 1699-1709; it reads VVTTAKSVQSK. The tract at residues 2014–2169 is PHR domain 2; the sequence is ARFARCDVSR…GQLPCILYYS (156 aa). Disordered stretches follow at residues 2329-2353 and 2580-2604; these read SADLRNGQSQSVSQSQSQSQSVPIN and NGAGDRRRNTGGGIAGSGAAPNTHQ. Over residues 2336 to 2350 the composition is skewed to low complexity; it reads QSQSVSQSQSQSQSV. A required for interaction with Rae1 region spans residues 2885–4082; that stretch reads AEVSAPGPNL…FVSSLNPTGG (1198 aa). A Filamin repeat occupies 2906–3000; the sequence is WGGMAPPPRI…LEEVYRVDVK (95 aa). Disordered regions lie at residues 3005–3024, 3117–3210, 3277–3333, 3348–3378, 3551–3587, and 3901–3936; these read PPPTQRNSAQRRPQAPSKLR, KGVG…EPEQ, GGQD…ASET, TTTGQGEQQSELQLATTSTASSASKRNPMGP, PRLLSPGSRDLNGDADTEGKEGKNSDQASAGEKDLGR, and ASLAQHNHPPPHHPQQQHHQQQQMNLQLQQHQAPPV. The segment covering 3176–3191 has biased composition (basic and acidic residues); sequence KHADLAEREAQVQEER. Residues 3192 to 3210 show a composition bias toward acidic residues; that stretch reads EKEEEQVDDEDADDREPEQ. The segment covering 3282-3292 has biased composition (polar residues); that stretch reads PRGNGNRSQQE. A compositionally biased stretch (low complexity) spans 3348–3371; that stretch reads TTTGQGEQQSELQLATTSTASSAS. Low complexity predominate over residues 3917 to 3932; the sequence is QHHQQQQMNLQLQQHQ. A DOC domain is found at 4195–4374; that stretch reads HNQVHSVATG…KHQPHLRLSH (180 aa). Disordered regions lie at residues 4633 to 4655 and 4680 to 4702; these read ASTGPSGSGGVSGSSSGNGGAVL and LRSRPPTGEPGTTDPFQFDALPP. Residues 4638–4652 are compositionally biased toward gly residues; sequence SGSGGVSGSSSGNGG. Residues Cys-4991, Cys-4994, Cys-5009, His-5011, His-5014, Cys-5017, Cys-5038, Cys-5041, Cys-5101, and Cys-5104 each contribute to the Zn(2+) site. Residues 4991–5042 form an RING-type; atypical zinc finger; the sequence is CMICFVEALSCAPSIHLECGHVFHYHCCKAVLEKRWSGPRITFGFSLCPICK. A tandem cysteine domain region spans residues 5096-5231; that stretch reads YAYYVCFKCQ…LGCGVCRNAQ (136 aa). The active site involves Cys-5115. 7 residues coordinate Zn(2+): Cys-5130, Cys-5133, Cys-5142, His-5145, Cys-5154, Cys-5157, and Cys-5158. The active site involves Cys-5165. Residues Cys-5172, Cys-5175, Cys-5193, Cys-5207, His-5213, Cys-5224, and Cys-5227 each contribute to the Zn(2+) site.

The protein belongs to the RING-Cys relay (RCR) family. Component of an E3 ubiquitin ligase complex composed of hiw, Rae1 and Fsn. Interacts with Rae1; the interaction with Rae1 may protect hiw from autophagy-mediated degradation. In terms of tissue distribution, express throughout the nervous system. Stage 13 embryos show expression in the central nervous system (CNS) at the longitudinal axon tracts around which the synaptic neuropil forms. Expression outside the CNS starts at stage 16 in presynaptic terminals at the periactive zone which surround the active zone. Expression at neuromuscular junctions (NMJ) and in the CNS is also seen in third instar larvae (at protein level).

Its subcellular location is the synapse. It is found in the cell projection. It localises to the axon. The catalysed reaction is [E2 ubiquitin-conjugating enzyme]-S-ubiquitinyl-L-cysteine + [acceptor protein]-L-threonine = [E2 ubiquitin-conjugating enzyme]-L-cysteine + [acceptor protein]-3-O-ubiquitinyl-L-threonine.. It functions in the pathway protein modification; protein ubiquitination. In terms of biological role, atypical E3 ubiquitin-protein ligase which specifically mediates ubiquitination of threonine and serine residues on target proteins, instead of ubiquitinating lysine residues. Shows esterification activity towards both threonine and serine, with a preference for threonine, and acts via two essential catalytic cysteine residues that relay ubiquitin to its substrate via thioester intermediates. Required in the presynaptic motoneuron to down-regulate the levels of wnd and restrain synaptic terminal growth at the neuromuscular junction (NMJ) together with Rae1 and Fsn. This chain is E3 ubiquitin-protein ligase highwire, found in Drosophila melanogaster (Fruit fly).